The chain runs to 309 residues: Probable manganese-dependent inorganic pyrophosphatase (309 aa).

Mn(2+) is bound by residues His9, Asp13, Asp15, Asp75, His97, and Asp149.

It belongs to the PPase class C family. Requires Mn(2+) as cofactor.

Its subcellular location is the cytoplasm. The enzyme catalyses diphosphate + H2O = 2 phosphate + H(+). This Bacillus cereus (strain G9842) protein is Probable manganese-dependent inorganic pyrophosphatase.